The sequence spans 165 residues: Lipoprotein signal peptidase (165 aa).

2 helical membrane-spanning segments follow: residues 64–84 (LGRW…GAWM) and 88–108 (GSRL…GNAV). Active-site residues include Asp-118 and Asp-136. A helical membrane pass occupies residues 128–148 (SWYVFNVADAGIVAGVAGLLV).

Belongs to the peptidase A8 family.

It is found in the cell inner membrane. It catalyses the reaction Release of signal peptides from bacterial membrane prolipoproteins. Hydrolyzes -Xaa-Yaa-Zaa-|-(S,diacylglyceryl)Cys-, in which Xaa is hydrophobic (preferably Leu), and Yaa (Ala or Ser) and Zaa (Gly or Ala) have small, neutral side chains.. The protein operates within protein modification; lipoprotein biosynthesis (signal peptide cleavage). Functionally, this protein specifically catalyzes the removal of signal peptides from prolipoproteins. In Methylobacterium sp. (strain 4-46), this protein is Lipoprotein signal peptidase.